The chain runs to 37 residues: MKVRASVKKLCRNCKIVRRNGVVRVICVEPRHKQRQG.

Belongs to the bacterial ribosomal protein bL36 family.

This chain is Large ribosomal subunit protein bL36, found in Acidithiobacillus ferrooxidans (strain ATCC 23270 / DSM 14882 / CIP 104768 / NCIMB 8455) (Ferrobacillus ferrooxidans (strain ATCC 23270)).